Consider the following 337-residue polypeptide: Inositol 2-dehydrogenase (337 aa).

This sequence belongs to the Gfo/Idh/MocA family. In terms of assembly, homotetramer.

The catalysed reaction is myo-inositol + NAD(+) = scyllo-inosose + NADH + H(+). Functionally, involved in the oxidation of myo-inositol (MI) to 2-keto-myo-inositol (2KMI or 2-inosose). The protein is Inositol 2-dehydrogenase of Klebsiella pneumoniae (strain 342).